We begin with the raw amino-acid sequence, 206 residues long: Ribonuclease M5 (206 aa).

One can recognise a Toprim domain in the interval 8–91; sequence NEVIVVEGRD…AFLNRDEARP (84 aa). Residues Glu-14, Asp-60, and Asp-62 each coordinate Mg(2+).

The protein belongs to the ribonuclease M5 family. Mg(2+) serves as cofactor.

The protein localises to the cytoplasm. It carries out the reaction Endonucleolytic cleavage of RNA, removing 21 and 42 nucleotides, respectively, from the 5'- and 3'-termini of a 5S-rRNA precursor.. Its function is as follows. Required for correct processing of both the 5' and 3' ends of 5S rRNA precursor. Cleaves both sides of a double-stranded region yielding mature 5S rRNA in one step. This chain is Ribonuclease M5, found in Lactococcus lactis subsp. lactis (strain IL1403) (Streptococcus lactis).